Here is a 620-residue protein sequence, read N- to C-terminus: Zinc finger protein GLIS1 (620 aa).

A disordered region spans residues 108-132; it reads PLTGDLGGPSKRARPGPASTDSHEG. Residues 195–220 form a C2H2-type 1 zinc finger; it reads QACRWVDCCAAYEQQEELVRHIEKSH. The C2H2-type 2; atypical zinc finger occupies 229 to 256; the sequence is FTCFWAGCVRRYKPFNARYKLLIHMRVH. 3 consecutive C2H2-type zinc fingers follow at residues 262-286, 292-316, and 322-346; these read NKCM…LRSH, YLCQ…QRTH, and YACQ…VKAH. The short motif at 340–356 is the Bipartite nuclear localization signal element; sequence RKHVKAHSAKEQQVRKK. The segment at 414 to 515 is disordered; the sequence is ASGLLPPAHD…PPLPSPQGYQ (102 aa). Residues 477-488 are compositionally biased toward low complexity; that stretch reads SSQSHSPGGQPF. Residues 489 to 510 are compositionally biased toward pro residues; the sequence is PTLPSKPSYPPFQSPPPPPLPS.

This sequence belongs to the GLI C2H2-type zinc-finger protein family. As to quaternary structure, interacts with KLF4. Interacts with POU5F1 and/or POU5F1B. Interacts with SOX2.

It is found in the nucleus. Its function is as follows. Acts both as a repressor and an activator of transcription. Binds to the consensus sequence 5'-GACCACCCAC-3'. By controlling the expression of genes involved in cell differentiation inhibits the lineage commitment of multipotent cells. Prevents, for instance, the differentiation of multipotent mesenchymal cells into adipocyte and osteoblast. The sequence is that of Zinc finger protein GLIS1 from Homo sapiens (Human).